A 158-amino-acid chain; its full sequence is Deoxyuridine 5'-triphosphate nucleotidohydrolase (158 aa).

Residues 66-68, asparagine 79, 83-85, and lysine 93 each bind substrate; these read RSG and TID. Positions 139-158 are disordered; sequence RGFGSSGVARKGHYQGKPLA.

The protein belongs to the dUTPase family. Mg(2+) serves as cofactor.

The catalysed reaction is dUTP + H2O = dUMP + diphosphate + H(+). Its pathway is pyrimidine metabolism; dUMP biosynthesis; dUMP from dCTP (dUTP route): step 2/2. Functionally, this enzyme is involved in nucleotide metabolism: it produces dUMP, the immediate precursor of thymidine nucleotides and it decreases the intracellular concentration of dUTP so that uracil cannot be incorporated into DNA. This Helicobacter hepaticus (strain ATCC 51449 / 3B1) protein is Deoxyuridine 5'-triphosphate nucleotidohydrolase.